Here is a 196-residue protein sequence, read N- to C-terminus: Potassium-transporting ATPase KdpC subunit (196 aa).

A helical membrane pass occupies residues 7–27 (PALVLFFVLTLLTGVAYPLAV).

This sequence belongs to the KdpC family. The system is composed of three essential subunits: KdpA, KdpB and KdpC.

Its subcellular location is the cell inner membrane. Its function is as follows. Part of the high-affinity ATP-driven potassium transport (or Kdp) system, which catalyzes the hydrolysis of ATP coupled with the electrogenic transport of potassium into the cytoplasm. This subunit acts as a catalytic chaperone that increases the ATP-binding affinity of the ATP-hydrolyzing subunit KdpB by the formation of a transient KdpB/KdpC/ATP ternary complex. In Polaromonas naphthalenivorans (strain CJ2), this protein is Potassium-transporting ATPase KdpC subunit.